Reading from the N-terminus, the 341-residue chain is MTYRDAGVDIDAGNALVERIKPLVKRSFRPEVMGGLGGFGALFDLSGKYKEPVLVSGTDGVGTKLKLAQQLGRHDTIGIDLVGMCVNDVLVQGAEPLFFLDYFATGKLDIDTAAAVVGGIARGCELSGCALIGGETAEMPDMYPPGEYDLAGFTVGAVEKSQLLDGAQVREGDVLIGIASSGPHSNGYSLIRKIYERAGSPADLVLDDGVALIDALMAPTALYVKPILALLKSHGEAIHAMAHVTGGGLTENIIRVIPDGLGLDIDATAWILPPVFAWLQREGAVADAEMWRTFNCGIGFVLVAAPAQAAALEQALDAQSLAHWRIGQVVTAQGDERVRIG.

It belongs to the AIR synthase family.

The protein resides in the cytoplasm. The enzyme catalyses 2-formamido-N(1)-(5-O-phospho-beta-D-ribosyl)acetamidine + ATP = 5-amino-1-(5-phospho-beta-D-ribosyl)imidazole + ADP + phosphate + H(+). It participates in purine metabolism; IMP biosynthesis via de novo pathway; 5-amino-1-(5-phospho-D-ribosyl)imidazole from N(2)-formyl-N(1)-(5-phospho-D-ribosyl)glycinamide: step 2/2. The protein is Phosphoribosylformylglycinamidine cyclo-ligase of Xanthomonas campestris pv. campestris (strain 8004).